The chain runs to 1252 residues: DNA-directed RNA polymerase subunit beta (1252 aa).

It belongs to the RNA polymerase beta chain family. The RNAP catalytic core consists of 2 alpha, 1 beta, 1 beta' and 1 omega subunit. When a sigma factor is associated with the core the holoenzyme is formed, which can initiate transcription.

The catalysed reaction is RNA(n) + a ribonucleoside 5'-triphosphate = RNA(n+1) + diphosphate. In terms of biological role, DNA-dependent RNA polymerase catalyzes the transcription of DNA into RNA using the four ribonucleoside triphosphates as substrates. The polypeptide is DNA-directed RNA polymerase subunit beta (Chlamydia trachomatis serovar L2 (strain ATCC VR-902B / DSM 19102 / 434/Bu)).